The primary structure comprises 203 residues: Large ribosomal subunit protein uL13 (203 aa).

At alanine 2 the chain carries N-acetylalanine. Arginine 59 is modified (citrulline). Serine 77 is modified (phosphoserine). A Citrulline modification is found at arginine 140. The residue at position 191 (lysine 191) is an N6-acetyllysine.

This sequence belongs to the universal ribosomal protein uL13 family. As to quaternary structure, component of the 60S ribosome. Component of the GAIT complex. Interacts with EIF4G1. Post-translationally, phosphorylation at Ser-77 upon interferon-gamma treatment in monocytes involves a DAPK1-DAPK3 kinase cascade and is causing release from the ribosome, association with the GAIT complex and subsequent involvement in transcript-selective translation inhibition. Citrullinated by PADI4.

The protein resides in the cytoplasm. Functionally, associated with ribosomes but is not required for canonical ribosome function and has extra-ribosomal functions. Component of the GAIT (gamma interferon-activated inhibitor of translation) complex which mediates interferon-gamma-induced transcript-selective translation inhibition in inflammation processes. Upon interferon-gamma activation and subsequent phosphorylation dissociates from the ribosome and assembles into the GAIT complex which binds to stem loop-containing GAIT elements in the 3'-UTR of diverse inflammatory mRNAs (such as ceruplasmin) and suppresses their translation. In the GAIT complex interacts with m7G cap-bound eIF4G at or near the eIF3-binding site and blocks the recruitment of the 43S ribosomal complex. Involved in methylation of rRNA. The polypeptide is Large ribosomal subunit protein uL13 (RPL13A) (Oryctolagus cuniculus (Rabbit)).